Reading from the N-terminus, the 89-residue chain is Small ribosomal subunit protein uS15 (89 aa).

Belongs to the universal ribosomal protein uS15 family. Part of the 30S ribosomal subunit. Forms a bridge to the 50S subunit in the 70S ribosome, contacting the 23S rRNA.

In terms of biological role, one of the primary rRNA binding proteins, it binds directly to 16S rRNA where it helps nucleate assembly of the platform of the 30S subunit by binding and bridging several RNA helices of the 16S rRNA. Its function is as follows. Forms an intersubunit bridge (bridge B4) with the 23S rRNA of the 50S subunit in the ribosome. The protein is Small ribosomal subunit protein uS15 of Histophilus somni (strain 129Pt) (Haemophilus somnus).